Here is an 853-residue protein sequence, read N- to C-terminus: WEB family protein At5g16730, chloroplastic (853 aa).

Low complexity-rich tracts occupy residues 1–27 and 36–49; these read MASK…PATP and KSET…STTT. A chloroplast-targeting transit peptide spans 1–84; sequence MASKTKTSLS…PTPPEKSQAR (84 aa). Disordered regions lie at residues 1-106, 386-465, 666-765, and 778-820; these read MASK…IKED, KEDL…SKKA, LAKK…SVEV, and KEAF…ALTA. The segment covering 92 to 101 has biased composition (polar residues); sequence ESPQTTTRLS. A coiled-coil region spans residues 94–670; that stretch reads PQTTTRLSQI…LEEAILAKKQ (577 aa). Basic and acidic residues-rich tracts occupy residues 402-465, 698-718, and 732-753; these read EVSK…SKKA, NGHR…HEPP, and MEEK…KKDE. A compositionally biased stretch (acidic residues) spans 754–763; the sequence is SQDDDKDDSV. Basic and acidic residues predominate over residues 778 to 788; that stretch reads KEAFPDKKSEL. A Phosphoserine modification is found at Ser790. Residues 797–807 show a composition bias toward basic and acidic residues; sequence SSKIDESDKTS.

It belongs to the WEB family.

The protein localises to the plastid. Its subcellular location is the chloroplast. The sequence is that of WEB family protein At5g16730, chloroplastic from Arabidopsis thaliana (Mouse-ear cress).